A 443-amino-acid polypeptide reads, in one-letter code: Putative transporter AmpG 1 (443 aa).

13 helical membrane-spanning segments follow: residues 5 to 25 (SHIY…MITG), 42 to 62 (IGML…APVF), 78 to 98 (LSWI…LSFL), 104 to 124 (LVLL…QDTI), 143 to 163 (GIYI…AIYL), 171 to 191 (AIYK…ILVA), 230 to 250 (FNYF…GFYF), 254 to 274 (DINL…YRLP), 299 to 319 (VCKF…GIIM), 324 to 344 (ILYS…FFIL), 354 to 374 (ILFI…TAYI), 393 to 413 (LSSM…YMVV), and 415 to 435 (FGWQ…LLIL).

Belongs to the major facilitator superfamily.

It localises to the cell inner membrane. In Rickettsia prowazekii (strain Madrid E), this protein is Putative transporter AmpG 1 (ampG1).